The chain runs to 465 residues: ATP synthase subunit beta (465 aa).

152–159 (GGAGVGKT) serves as a coordination point for ATP.

It belongs to the ATPase alpha/beta chains family. As to quaternary structure, F-type ATPases have 2 components, CF(1) - the catalytic core - and CF(0) - the membrane proton channel. CF(1) has five subunits: alpha(3), beta(3), gamma(1), delta(1), epsilon(1). CF(0) has three main subunits: a(1), b(2) and c(9-12). The alpha and beta chains form an alternating ring which encloses part of the gamma chain. CF(1) is attached to CF(0) by a central stalk formed by the gamma and epsilon chains, while a peripheral stalk is formed by the delta and b chains.

The protein localises to the cell inner membrane. The catalysed reaction is ATP + H2O + 4 H(+)(in) = ADP + phosphate + 5 H(+)(out). Its function is as follows. Produces ATP from ADP in the presence of a proton gradient across the membrane. The catalytic sites are hosted primarily by the beta subunits. The chain is ATP synthase subunit beta from Campylobacter hominis (strain ATCC BAA-381 / DSM 21671 / CCUG 45161 / LMG 19568 / NCTC 13146 / CH001A).